The primary structure comprises 264 residues: tRNA pseudouridine synthase A (264 aa).

Asp-51 (nucleophile) is an active-site residue. Tyr-109 provides a ligand contact to substrate.

Belongs to the tRNA pseudouridine synthase TruA family. In terms of assembly, homodimer.

The catalysed reaction is uridine(38/39/40) in tRNA = pseudouridine(38/39/40) in tRNA. Its function is as follows. Formation of pseudouridine at positions 38, 39 and 40 in the anticodon stem and loop of transfer RNAs. The chain is tRNA pseudouridine synthase A from Polaromonas naphthalenivorans (strain CJ2).